Reading from the N-terminus, the 512-residue chain is uncharacterized protein (512 aa).

12 consecutive transmembrane segments (helical) span residues 25–45, 55–75, 96–116, 123–143, 148–168, 183–203, 238–258, 263–283, 294–314, 329–349, 359–379, and 386–406; these read GFYT…VICA, LLYP…PLIL, LVVC…VFLA, VVTG…LPAV, LLLT…LVIV, LLWL…FVGP, MTTY…SLRA, GSLH…SMLW, GLLL…MVAE, FLLA…WISV, LICV…VALG, and ATIW…VASL. Residues 428–512 are disordered; it reads YRPATPNPIH…APLDAGQRIA (85 aa).

The protein localises to the cell membrane. This is an uncharacterized protein from Mycobacterium tuberculosis (strain CDC 1551 / Oshkosh).